The primary structure comprises 902 residues: Glutamate receptor 4 (902 aa).

The first 20 residues, 1 to 20, serve as a signal peptide directing secretion; sequence MRIICRQIVLLFSGFWGLAM. The Extracellular portion of the chain corresponds to 22-544; it reads AFPSSVQIGG…GVFSFLDPLA (523 aa). Residues asparagine 52, asparagine 56, asparagine 258, asparagine 371, asparagine 407, and asparagine 414 are each glycosylated (N-linked (GlcNAc...) asparagine). Cysteine 84 and cysteine 331 are disulfide-bonded. L-glutamate is bound by residues proline 500, threonine 502, and arginine 507. Residues 545–565 traverse the membrane as a helical segment; it reads YEIWMCIVFAYIGVSVVLFLV. The Cytoplasmic segment spans residues 566 to 592; sequence SRFSPYEWHTEEPEDGKEGPSDQPPNE. The segment at residues 593 to 608 is an intramembrane region (helical; Pore-forming); it reads FGIFNSLWFSLGAFMQ. An intramembrane segment occupies 609–611; the sequence is QGC. Cysteine 611 carries S-palmitoyl cysteine lipidation. At 612–617 the chain is on the cytoplasmic side; that stretch reads DISPRS. A helical transmembrane segment spans residues 618-638; the sequence is LSGRIVGGVWWFFTLIIISSY. The Extracellular portion of the chain corresponds to 639-813; that stretch reads TANLAAFLTV…DKTSALSLSN (175 aa). 3 residues coordinate L-glutamate: serine 676, threonine 677, and glutamate 727. Cysteine 740 and cysteine 795 are oxidised to a cystine. The chain crosses the membrane as a helical span at residues 814–834; sequence VAGVFYILVGGLGLAMLVALI. At 835–902 the chain is on the cytoplasmic side; it reads EFCYKSRAEA…GLAVIASDLP (68 aa). A lipid anchor (S-palmitoyl cysteine) is attached at cysteine 837. Residue serine 862 is modified to Phosphoserine; by PKC/PRKCG.

Belongs to the glutamate-gated ion channel (TC 1.A.10.1) family. GRIA4 subfamily. As to quaternary structure, homotetramer or heterotetramer of pore-forming glutamate receptor subunits. Tetramers may be formed by the dimerization of dimers. Interacts with EPB41L1 via its C-terminus. Isoform 3 interacts with PICK1. Found in a complex with GRIA1, GRIA2, GRIA3, CNIH2, CNIH3, CACNG2, CACNG3, CACNG4, CACNG5, CACNG7 and CACNG8. Interacts with CACNG5 and PRKCG. Found in a complex with GRIA1, GRIA2, GRIA3, DLG4, CACNG8 and CNIH2. Palmitoylated. Depalmitoylated upon L-glutamate stimulation. ZDHHC3/GODZ specifically palmitoylates Cys-611, which leads to Golgi retention and decreased cell surface expression. In contrast, Cys-837 palmitoylation does not affect cell surface expression but regulates stimulation-dependent endocytosis. In terms of processing, phosphorylated at Ser-862 by PRKCG; phosphorylation increases plasma membrane-associated GRI4 expression. In terms of tissue distribution, detected in cerebellum.

It is found in the cell membrane. Its subcellular location is the postsynaptic cell membrane. The protein resides in the cell projection. The protein localises to the dendrite. The enzyme catalyses Ca(2+)(in) = Ca(2+)(out). It carries out the reaction Na(+)(in) = Na(+)(out). The catalysed reaction is Mg(2+)(in) = Mg(2+)(out). Its function is as follows. Ionotropic glutamate receptor that functions as a ligand-gated cation channel, gated by L-glutamate and glutamatergic agonists such as alpha-amino-3-hydroxy-5-methyl-4-isoxazolepropionic acid (AMPA), quisqualic acid, and kainic acid. L-glutamate acts as an excitatory neurotransmitter at many synapses in the central nervous system and plays an important role in fast excitatory synaptic transmission. Binding of the excitatory neurotransmitter L-glutamate induces a conformation change, leading to the opening of the cation channel, and thereby converts the chemical signal to an electrical impulse upon entry of monovalent and divalent cations such as sodium and calcium. The receptor then desensitizes rapidly and enters a transient inactive state, characterized by the presence of bound agonist. In the presence of CACNG8, shows resensitization which is characterized by a delayed accumulation of current flux upon continued application of L-glutamate. The sequence is that of Glutamate receptor 4 from Rattus norvegicus (Rat).